Reading from the N-terminus, the 134-residue chain is Large ribosomal subunit protein mL41 (134 aa).

Residues 1 to 13 (MGFLTAVTQGLVR) constitute a mitochondrion transit peptide.

It belongs to the mitochondrion-specific ribosomal protein mL41 family. In terms of assembly, component of the mitochondrial ribosome large subunit (39S) which comprises a 16S rRNA and about 50 distinct proteins. Interacts with BCL2. Was also identified in the 28S mitochondrial ribosome.

It localises to the mitochondrion. Its function is as follows. Component of the mitochondrial ribosome large subunit. Also involved in apoptosis and cell cycle. Enhances p53/TP53 stability, thereby contributing to p53/TP53-induced apoptosis in response to growth-inhibitory condition. Enhances p53/TP53 translocation to the mitochondria. Has the ability to arrest the cell cycle at the G1 phase, possibly by stabilizing the CDKN1A and CDKN1B (p27Kip1) proteins. The polypeptide is Large ribosomal subunit protein mL41 (Mrpl41) (Rattus norvegicus (Rat)).